The following is a 130-amino-acid chain: Protein ApaG (130 aa).

An ApaG domain is found at 3–127 (RAVTRQIEVL…FSLDSPDIRR (125 aa)).

This Afipia carboxidovorans (strain ATCC 49405 / DSM 1227 / KCTC 32145 / OM5) (Oligotropha carboxidovorans) protein is Protein ApaG.